We begin with the raw amino-acid sequence, 135 residues long: Large ribosomal subunit protein uL16 (135 aa).

Belongs to the universal ribosomal protein uL16 family. Part of the 50S ribosomal subunit.

Its function is as follows. Binds 23S rRNA and is also seen to make contacts with the A and possibly P site tRNAs. The protein is Large ribosomal subunit protein uL16 (rplP) of Carsonella ruddii (strain PV).